We begin with the raw amino-acid sequence, 415 residues long: 4-hydroxy-3-methylbut-2-enyl diphosphate reductase (415 aa).

Cysteine 66 is a binding site for [4Fe-4S] cluster. Histidine 96 provides a ligand contact to (2E)-4-hydroxy-3-methylbut-2-enyl diphosphate. Histidine 96 provides a ligand contact to dimethylallyl diphosphate. Histidine 96 provides a ligand contact to isopentenyl diphosphate. A [4Fe-4S] cluster-binding site is contributed by cysteine 158. Histidine 186 is a binding site for (2E)-4-hydroxy-3-methylbut-2-enyl diphosphate. Residue histidine 186 participates in dimethylallyl diphosphate binding. Position 186 (histidine 186) interacts with isopentenyl diphosphate. Glutamate 188 functions as the Proton donor in the catalytic mechanism. Position 259 (threonine 259) interacts with (2E)-4-hydroxy-3-methylbut-2-enyl diphosphate. [4Fe-4S] cluster is bound at residue cysteine 297. Serine 326, serine 327, asparagine 328, and serine 388 together coordinate (2E)-4-hydroxy-3-methylbut-2-enyl diphosphate. Dimethylallyl diphosphate-binding residues include serine 326, serine 327, asparagine 328, and serine 388. Isopentenyl diphosphate contacts are provided by serine 326, serine 327, asparagine 328, and serine 388.

This sequence belongs to the IspH family. The cofactor is [4Fe-4S] cluster.

It carries out the reaction isopentenyl diphosphate + 2 oxidized [2Fe-2S]-[ferredoxin] + H2O = (2E)-4-hydroxy-3-methylbut-2-enyl diphosphate + 2 reduced [2Fe-2S]-[ferredoxin] + 2 H(+). The enzyme catalyses dimethylallyl diphosphate + 2 oxidized [2Fe-2S]-[ferredoxin] + H2O = (2E)-4-hydroxy-3-methylbut-2-enyl diphosphate + 2 reduced [2Fe-2S]-[ferredoxin] + 2 H(+). It functions in the pathway isoprenoid biosynthesis; dimethylallyl diphosphate biosynthesis; dimethylallyl diphosphate from (2E)-4-hydroxy-3-methylbutenyl diphosphate: step 1/1. Its pathway is isoprenoid biosynthesis; isopentenyl diphosphate biosynthesis via DXP pathway; isopentenyl diphosphate from 1-deoxy-D-xylulose 5-phosphate: step 6/6. Functionally, catalyzes the conversion of 1-hydroxy-2-methyl-2-(E)-butenyl 4-diphosphate (HMBPP) into a mixture of isopentenyl diphosphate (IPP) and dimethylallyl diphosphate (DMAPP). Acts in the terminal step of the DOXP/MEP pathway for isoprenoid precursor biosynthesis. This is 4-hydroxy-3-methylbut-2-enyl diphosphate reductase from Acaryochloris marina (strain MBIC 11017).